The primary structure comprises 860 residues: Gag-Pro polyprotein (860 aa).

A lipid anchor (N-myristoyl glycine; by host) is attached at Gly-2. 2 stretches are compositionally biased toward basic and acidic residues: residues 151–169 (YDEP…EKDH) and 178–191 (QRKE…KEKD). Residues 151–191 (YDEPYEEKEKADKNEEKDHVRKIKKVVQRKENSEGKRKEKD) form a disordered region. Positions 305–308 (PSAP) match the PTAP/PSAP motif motif. 2 consecutive CCHC-type zinc fingers follow at residues 525 to 542 (PVCF…DCKD) and 552 to 569 (GLCP…ECKS). Residues 572–631 (DKDGNPLPPLETNAENSKNLVKGQSPSPAQKGDGVKGSGLNPEAPPFTIHDLPRGTPGSA) are disordered. Positions 584–599 (NAENSKNLVKGQSPSP) are enriched in polar residues. In terms of domain architecture, Peptidase A2 spans 766–841 (FLGLLDTGAD…LPFTLWGRDI (76 aa)). The active-site Protease; shared with dimeric partner is the Asp-771.

Homodimer; when myristoylated. As to quaternary structure, homodimer. In terms of assembly, NC-dUTPase is a homotrimer. Post-translationally, released by autocatalytic processing. In terms of processing, myristoylated. Myristoylation of the matrix (MA) domain mediates the transport and binding of Gag polyproteins to the host plasma membrane and is required for the assembly of viral particles. Specific enzymatic cleavages in vivo yield mature proteins.

It is found in the virion. It carries out the reaction dUTP + H2O = dUMP + diphosphate + H(+). Its activity is regulated as follows. Inhibited by pepstatin A. Functionally, matrix protein. Nucleocapsid protein p14: Binds strongly to viral nucleic acids and promote their aggregation. Also destabilizes the nucleic acids duplexes via highly structured zinc-binding motifs. In terms of biological role, capsid protein. Its function is as follows. The aspartyl protease mediates proteolytic cleavages of Gag and Gag-Pol polyproteins during or shortly after the release of the virion from the plasma membrane. Cleavages take place as an ordered, step-wise cascade to yield mature proteins. This process is called maturation. Displays maximal activity during the budding process just prior to particle release from the cell. The protein is Gag-Pro polyprotein (gag-pro) of Mouse mammary tumor virus (strain BR6) (MMTV).